The primary structure comprises 442 residues: FBD-associated F-box protein At1g66310 (442 aa).

One can recognise an F-box domain in the interval 18-64 (VDWLRDLPESLLCHILLNLPTKDVVKTSVLSSKWRNLWRLVPGLDLD). The 53-residue stretch at 363–415 (KRRTSVLSGPRRLLSSLEYVEIESPLTGEVFEMKLVSYLLENSPILKKLTINL) folds into the FBD domain.

The polypeptide is FBD-associated F-box protein At1g66310 (Arabidopsis thaliana (Mouse-ear cress)).